The primary structure comprises 226 residues: Uridylate kinase (226 aa).

6 to 10 (KISGK) provides a ligand contact to ATP. Residue glycine 43 coordinates UMP. Positions 44 and 48 each coordinate ATP. UMP-binding positions include aspartate 65 and 113–119 (FQPGQST). ATP-binding residues include threonine 139, asparagine 140, tyrosine 145, and aspartate 148.

The protein belongs to the UMP kinase family. In terms of assembly, homohexamer.

The protein localises to the cytoplasm. It catalyses the reaction UMP + ATP = UDP + ADP. It participates in pyrimidine metabolism; CTP biosynthesis via de novo pathway; UDP from UMP (UMPK route): step 1/1. Its activity is regulated as follows. Inhibited by UTP. Functionally, catalyzes the reversible phosphorylation of UMP to UDP. The sequence is that of Uridylate kinase from Sulfurisphaera tokodaii (strain DSM 16993 / JCM 10545 / NBRC 100140 / 7) (Sulfolobus tokodaii).